A 116-amino-acid chain; its full sequence is Spexin (116 aa).

Residues 1–26 form the signal peptide; sequence MKGPSILAVAALALLLVLSVLENSSG. Positions 27–35 are excised as a propeptide; it reads APQRLSEKR. A Glutamine amide modification is found at Gln-49. Propeptides lie at residues 50-116 and 74-116; these read GHRF…RFYW and PNLQ…RFYW. Residues 56–73 show a composition bias toward basic and acidic residues; sequence DQSRRKELADRPPPERRN. Positions 56–75 are disordered; that stretch reads DQSRRKELADRPPPERRNPN.

The protein belongs to the spexin family. In terms of tissue distribution, widely expressed; predominantly expressed in epithelial cells in the skin, respiratory, digestive, urinary and reproductive systems, retina, adrenal gland and various brain regions. In the adrenal gland, expressed in parenchymal cells of the cortex and in ganglionic cells and intermingled cortical cells of the medulla. Expressed in the type I glomic cells within the carotid body (at protein level). Widely expressed. Strongly expressed in esophagus, liver, pancreas, kidney, brain, hypothalamus, thyroid and ovary. Expressed in the zona glomerulosa (ZG) and zona fasciculata/reticularis (ZF/R) of the adrenal gland. Also expressed in stomach, lung, skeletal muscle, heart, uterus, spleen, adrenal gland and testis. Weakly expressed in small intestine, thymus, urinary bladder and adenohypophysis. In the brain, is expressed in the Barrington's nucleus, with lesser amount in the ventrolateral caudal periaqueductal gray (PAG) and in the mesopontine tegmentum.

Its subcellular location is the secreted. It is found in the extracellular space. It localises to the cytoplasmic vesicle. The protein localises to the secretory vesicle. In terms of biological role, plays a role as a central modulator of cardiovascular and renal function and nociception. Also plays a role in energy metabolism and storage. Inhibits adrenocortical cell proliferation with minor stimulation on corticosteroid release. Its function is as follows. Acts as a ligand for galanin receptors GALR2 and GALR3. Intracerebroventricular administration of the peptide induces an increase in arterial blood pressure, a decrease in both heart rate and renal excretion and delayed natriuresis. Intraventricular administration of the peptide induces antinociceptive activity. Intraperitoneal administration of the peptide induces a reduction in food consumption and body weight. Inhibits long chain fatty acid uptake into adipocytes. Also induces contraction of muscarinic-like stomach smooth muscles. Functionally, intracerebroventricular administration of the peptide induces a decrease in heart rate, but no change in arterial pressure, and an increase in urine flow rate. Intraventricular administration of the peptide induces antinociceptive activity. This Rattus norvegicus (Rat) protein is Spexin (SPX).